The following is a 196-amino-acid chain: Nucleoside triphosphate pyrophosphatase (196 aa).

Asp-73 acts as the Proton acceptor in catalysis.

This sequence belongs to the Maf family. A divalent metal cation serves as cofactor.

The protein localises to the cytoplasm. The catalysed reaction is a ribonucleoside 5'-triphosphate + H2O = a ribonucleoside 5'-phosphate + diphosphate + H(+). It carries out the reaction a 2'-deoxyribonucleoside 5'-triphosphate + H2O = a 2'-deoxyribonucleoside 5'-phosphate + diphosphate + H(+). Functionally, nucleoside triphosphate pyrophosphatase. May have a dual role in cell division arrest and in preventing the incorporation of modified nucleotides into cellular nucleic acids. In Anaplasma marginale (strain St. Maries), this protein is Nucleoside triphosphate pyrophosphatase.